A 551-amino-acid chain; its full sequence is Cleavage and polyadenylation specificity factor subunit 6 (551 aa).

An RRM domain is found at 81–161 (IALYIGNLTW…QNPVVTPCNK (81 aa)). Thr157 is subject to Phosphothreonine. Over residues 169–180 (MQSRKTTQSGQM) the composition is skewed to polar residues. 2 disordered regions span residues 169 to 410 (MQSR…TPLS) and 477 to 551 (LHGI…YRHR). Pro residues-rich tracts occupy residues 237–265 (TRPPLGPPGPPGPPGPPPPGQVLPPPLAG), 285–366 (GQPP…PPPA), and 377–388 (GPPPTDPYGRPP). Composition is skewed to basic and acidic residues over residues 389–404 (PYDRGDYGPPGREMDA) and 489–503 (SRRERSRERDHSRSR). Ser494, Ser500, Ser511, Ser513, and Ser525 each carry phosphoserine. Residues 504–514 (EKSRRHKSRSR) show a composition bias toward basic residues. The span at 515-551 (DRHDDYYRERSRERERHRDRDRDRDRERDREREYRHR) shows a compositional bias: basic and acidic residues.

It belongs to the RRM CPSF6/7 family. As to quaternary structure, component of the cleavage factor Im (CFIm) complex.

The protein localises to the nucleus. Its subcellular location is the nucleoplasm. It is found in the nucleus speckle. It localises to the cytoplasm. Component of the cleavage factor Im (CFIm) complex that functions as an activator of the pre-mRNA 3'-end cleavage and polyadenylation processing required for the maturation of pre-mRNA into functional mRNAs. CFIm contributes to the recruitment of multiprotein complexes on specific sequences on the pre-mRNA 3'-end, so called cleavage and polyadenylation signals (pA signals). Most pre-mRNAs contain multiple pA signals, resulting in alternative cleavage and polyadenylation (APA) producing mRNAs with variable 3'-end formation. The CFIm complex acts as a key regulator of cleavage and polyadenylation site choice during APA through its binding to 5'-UGUA-3' elements localized in the 3'-untranslated region (UTR) for a huge number of pre-mRNAs. Plays a role in mRNA export. The polypeptide is Cleavage and polyadenylation specificity factor subunit 6 (Gallus gallus (Chicken)).